Here is a 379-residue protein sequence, read N- to C-terminus: Alcohol dehydrogenase 1 (379 aa).

The Zn(2+) site is built by cysteine 47, threonine 49, histidine 69, cysteine 99, cysteine 102, cysteine 105, cysteine 113, and cysteine 177. 2 residues coordinate an alcohol: threonine 49 and histidine 69. Threonine 49 contacts NAD(+). Residues 202 to 207 (GLGAVG), aspartate 226, arginine 231, threonine 272, valine 295, 295 to 297 (VGV), phenylalanine 322, and arginine 372 each bind NAD(+).

It belongs to the zinc-containing alcohol dehydrogenase family. In terms of assembly, homodimer. The cofactor is Zn(2+).

It localises to the cytoplasm. The enzyme catalyses a primary alcohol + NAD(+) = an aldehyde + NADH + H(+). It carries out the reaction a secondary alcohol + NAD(+) = a ketone + NADH + H(+). This chain is Alcohol dehydrogenase 1 (ADH1), found in Hordeum vulgare (Barley).